The following is a 131-amino-acid chain: Glycine cleavage system H protein (131 aa).

The 83-residue stretch at 24–106 (TVTIGITDHA…YEDGWIIKLK (83 aa)) folds into the Lipoyl-binding domain. Lys65 carries the post-translational modification N6-lipoyllysine.

Belongs to the GcvH family. In terms of assembly, the glycine cleavage system is composed of four proteins: P, T, L and H. It depends on (R)-lipoate as a cofactor.

Functionally, the glycine cleavage system catalyzes the degradation of glycine. The H protein shuttles the methylamine group of glycine from the P protein to the T protein. The protein is Glycine cleavage system H protein of Chromohalobacter salexigens (strain ATCC BAA-138 / DSM 3043 / CIP 106854 / NCIMB 13768 / 1H11).